Consider the following 460-residue polypeptide: Fumarate hydratase class II (460 aa).

Substrate contacts are provided by residues 95–97 (SGT), 126–129 (HPND), 136–138 (SSN), and threonine 184. The active-site Proton donor/acceptor is histidine 185. Residue serine 315 is part of the active site. Residues serine 316 and 321 to 323 (KIN) each bind substrate.

The protein belongs to the class-II fumarase/aspartase family. Fumarase subfamily. Homotetramer.

The protein localises to the cytoplasm. The enzyme catalyses (S)-malate = fumarate + H2O. The protein operates within carbohydrate metabolism; tricarboxylic acid cycle; (S)-malate from fumarate: step 1/1. Functionally, involved in the TCA cycle. Catalyzes the stereospecific interconversion of fumarate to L-malate. The chain is Fumarate hydratase class II from Chlamydia caviae (strain ATCC VR-813 / DSM 19441 / 03DC25 / GPIC) (Chlamydophila caviae).